Reading from the N-terminus, the 269-residue chain is Eukaryotic translation initiation factor 3 subunit G-1 (269 aa).

Residues 188 to 266 (AAIRISNLSE…LILSVEWSKP (79 aa)) enclose the RRM domain. Ser-198 carries the phosphoserine modification.

The protein belongs to the eIF-3 subunit G family. Component of the eukaryotic translation initiation factor 3 (eIF-3) complex. The eIF-3 complex interacts with pix.

The protein localises to the cytoplasm. Functionally, RNA-binding component of the eukaryotic translation initiation factor 3 (eIF-3) complex, which is involved in protein synthesis of a specialized repertoire of mRNAs and, together with other initiation factors, stimulates binding of mRNA and methionyl-tRNAi to the 40S ribosome. The eIF-3 complex specifically targets and initiates translation of a subset of mRNAs involved in cell proliferation. This subunit can bind 18S rRNA. This chain is Eukaryotic translation initiation factor 3 subunit G-1, found in Drosophila melanogaster (Fruit fly).